The sequence spans 600 residues: Kynurenine 3-monooxygenase (600 aa).

The disordered stretch occupies residues 217–242 (GDSCADEPSGCGGRKQATTKSQGSEY).

This sequence belongs to the aromatic-ring hydroxylase family. KMO subfamily. It depends on FAD as a cofactor.

The protein resides in the mitochondrion outer membrane. It catalyses the reaction L-kynurenine + NADPH + O2 + H(+) = 3-hydroxy-L-kynurenine + NADP(+) + H2O. It functions in the pathway cofactor biosynthesis; NAD(+) biosynthesis; quinolinate from L-kynurenine: step 1/3. Functionally, catalyzes the hydroxylation of L-kynurenine (L-Kyn) to form 3-hydroxy-L-kynurenine (L-3OHKyn). Required for synthesis of quinolinic acid. This chain is Kynurenine 3-monooxygenase, found in Mycosarcoma maydis (Corn smut fungus).